Here is a 622-residue protein sequence, read N- to C-terminus: Gamma tubulin complex adapter SPC72 (622 aa).

Disordered regions lie at residues 1-58 (MVRR…PALM) and 221-263 (DKEE…IHDS). Positions 228 to 238 (LAQSSPAGSQL) are enriched in polar residues. The span at 239–250 (ESRDSPSSKEEN) shows a compositional bias: basic and acidic residues.

In terms of assembly, homooligomer. Interacts with CDC5, KAR1, KIN4, SPC97, SPC98, STU2 and TUB4. Post-translationally, phosphorylated by CDC5.

It is found in the cytoplasm. The protein resides in the cytoskeleton. It localises to the microtubule organizing center. The protein localises to the spindle pole body. In terms of biological role, spindle pole body (SPB) component that acts as the gamma-tubulin complex-binding protein of the SPB outer plaque. Anchors cytoplasmic microtubules at the half bridge of the spindle pole body (SPB) and accordingly functions in nuclear position and spindle orientation, including anaphase spindle migration into the bud. Recruits KIN4 kinase to both SPBs when cytoplasmic microtubules are defective, to delay mitotic exit. Links cytoplasmic microtubules with spindle orientation checkpoint (SPOC) components and, therefore, could function as part of the sensors of spindle orientation defects. Required for cytoplasmic astral microtubule growth during mitosis. Is strictly required for mating and karyogamy. The polypeptide is Gamma tubulin complex adapter SPC72 (SPC72) (Saccharomyces cerevisiae (strain ATCC 204508 / S288c) (Baker's yeast)).